A 296-amino-acid chain; its full sequence is Ribosomal RNA small subunit methyltransferase A (296 aa).

S-adenosyl-L-methionine contacts are provided by Asn40, Val42, Gly67, Glu88, Asp118, and Asn137.

This sequence belongs to the class I-like SAM-binding methyltransferase superfamily. rRNA adenine N(6)-methyltransferase family. RsmA subfamily.

The protein localises to the cytoplasm. The catalysed reaction is adenosine(1518)/adenosine(1519) in 16S rRNA + 4 S-adenosyl-L-methionine = N(6)-dimethyladenosine(1518)/N(6)-dimethyladenosine(1519) in 16S rRNA + 4 S-adenosyl-L-homocysteine + 4 H(+). In terms of biological role, specifically dimethylates two adjacent adenosines (A1518 and A1519) in the loop of a conserved hairpin near the 3'-end of 16S rRNA in the 30S particle. May play a critical role in biogenesis of 30S subunits. This is Ribosomal RNA small subunit methyltransferase A from Rhodococcus opacus (strain B4).